Consider the following 376-residue polypeptide: Transcriptional regulator STP4 (376 aa).

3 disordered regions span residues 25-58 (QNYC…PHAS), 89-122 (SSNS…SNSS), and 137-210 (VNCI…NWKP). 2 stretches are compositionally biased toward low complexity: residues 32 to 50 (SPSP…TSPP) and 89 to 103 (SSNS…YSPT). Polar residues-rich tracts occupy residues 146–183 (PRST…LSVK) and 191–200 (EPQNSNTIIS). The C2H2-type zinc finger occupies 241–263 (HICKYCERGFARPNDLFRHVKCH).

Its subcellular location is the nucleus. In terms of biological role, probable transcription factor involved in response to cell wall damage. In Candida albicans (strain SC5314 / ATCC MYA-2876) (Yeast), this protein is Transcriptional regulator STP4 (STP4).